We begin with the raw amino-acid sequence, 484 residues long: tRNA sulfurtransferase (484 aa).

A THUMP domain is found at 63 to 167 (QAFGERLACI…GDKLYMVTKR (105 aa)). Residues 185–186 (LI), K267, G289, and Q298 each bind ATP. C346 and C458 form a disulfide bridge. In terms of domain architecture, Rhodanese spans 406–484 (IDTNEVVIDI…GYHNVKVYRP (79 aa)). C458 functions as the Cysteine persulfide intermediate in the catalytic mechanism.

The protein belongs to the ThiI family.

The protein resides in the cytoplasm. The enzyme catalyses [ThiI sulfur-carrier protein]-S-sulfanyl-L-cysteine + a uridine in tRNA + 2 reduced [2Fe-2S]-[ferredoxin] + ATP + H(+) = [ThiI sulfur-carrier protein]-L-cysteine + a 4-thiouridine in tRNA + 2 oxidized [2Fe-2S]-[ferredoxin] + AMP + diphosphate. It catalyses the reaction [ThiS sulfur-carrier protein]-C-terminal Gly-Gly-AMP + S-sulfanyl-L-cysteinyl-[cysteine desulfurase] + AH2 = [ThiS sulfur-carrier protein]-C-terminal-Gly-aminoethanethioate + L-cysteinyl-[cysteine desulfurase] + A + AMP + 2 H(+). Its pathway is cofactor biosynthesis; thiamine diphosphate biosynthesis. In terms of biological role, catalyzes the ATP-dependent transfer of a sulfur to tRNA to produce 4-thiouridine in position 8 of tRNAs, which functions as a near-UV photosensor. Also catalyzes the transfer of sulfur to the sulfur carrier protein ThiS, forming ThiS-thiocarboxylate. This is a step in the synthesis of thiazole, in the thiamine biosynthesis pathway. The sulfur is donated as persulfide by IscS. The sequence is that of tRNA sulfurtransferase from Shewanella oneidensis (strain ATCC 700550 / JCM 31522 / CIP 106686 / LMG 19005 / NCIMB 14063 / MR-1).